A 621-amino-acid polypeptide reads, in one-letter code: MKQEKKKFDAEVGKILNLMIHSLYSNKEIFMRELISNASDACDKLRYLSQSEAELVAGDSNFKITVKGDKNNGQVIIRDNGIGMNKEDLIENLGTIARSGTANFLKNLSGDSKKDNMLIGQFGVGFYSSFMVADKVTVTSRKAGEDKVYVWESEGEGEYIVSNSDREFSRGTEIALHIKKEEDSFLDHFRLKHIVKSYSDHIAVPIYFFDEGDNNEIQLNSASALWTRSKSEITEEQYKEFYKSLSYAVDDPWVTMHNKNEGAIEFTNLLFIPSSKTYDLFHPDRKRRVKLYIKRVFISDENIDLIPSYLRFLRGVVDSEDLPLNISRESLQHNNVLEKIKNAITKRVLGELKKKKEDSPDEYNNFWANFGGALKEGLCEATTDHEKLLEVCIFRSALHNKMISLDEYIKGFKEGQNTIYYLSGDNPDKLLSSPQIEGLLSKNIDVLLFTDTVDDFWVNVNSEYKGHAIKSATRSDIDVDQATSSSEEKNKDDKKSDDEYKSLTDYFKEVLGILVKDVKISKKLTSSPACLAVSEAAMDIRMERFLIEQKQIANASAKNLELNPKNKIIEKIFNDLKANNKNNEELVKLIFDQACILEGEPVADTGAFSKRLNDIVQKAIL.

The a; substrate-binding stretch occupies residues 1–328 (MKQEKKKFDA…SEDLPLNISR (328 aa)). Positions 329 to 544 (ESLQHNNVLE…EAAMDIRMER (216 aa)) are b. Residues 479-498 (VDQATSSSEEKNKDDKKSDD) form a disordered region. Residues 486–498 (SEEKNKDDKKSDD) are compositionally biased toward basic and acidic residues. A c region spans residues 545–621 (FLIEQKQIAN…LNDIVQKAIL (77 aa)).

Belongs to the heat shock protein 90 family. Homodimer.

It is found in the cytoplasm. Functionally, molecular chaperone. Has ATPase activity. In Rickettsia bellii (strain OSU 85-389), this protein is Chaperone protein HtpG.